The chain runs to 265 residues: 3-methyl-2-oxobutanoate hydroxymethyltransferase (265 aa).

Asp45 and Asp84 together coordinate Mg(2+). 3-methyl-2-oxobutanoate contacts are provided by residues 45–46, Asp84, and Lys112; that span reads DS. Residue Glu114 participates in Mg(2+) binding. The Proton acceptor role is filled by Glu181.

It belongs to the PanB family. In terms of assembly, homodecamer; pentamer of dimers. Mg(2+) serves as cofactor.

It is found in the cytoplasm. The enzyme catalyses 3-methyl-2-oxobutanoate + (6R)-5,10-methylene-5,6,7,8-tetrahydrofolate + H2O = 2-dehydropantoate + (6S)-5,6,7,8-tetrahydrofolate. It functions in the pathway cofactor biosynthesis; (R)-pantothenate biosynthesis; (R)-pantoate from 3-methyl-2-oxobutanoate: step 1/2. In terms of biological role, catalyzes the reversible reaction in which hydroxymethyl group from 5,10-methylenetetrahydrofolate is transferred onto alpha-ketoisovalerate to form ketopantoate. This is 3-methyl-2-oxobutanoate hydroxymethyltransferase from Yersinia pestis bv. Antiqua (strain Antiqua).